A 431-amino-acid polypeptide reads, in one-letter code: MQALNITPEQFSRLLRDHNLTREQFIALYRLRPLVYTPELPGRAKLALVLTGVLIFALALFGNALVFYVVTRSKAMRTVTNIFICSLALSDLLITFFCIPVTMLQNISDNWLGGAFICKMVPFVQSTAVVTEILTMTCIAVERHQGLVHPFKMKWQYTNRRAFTMLGVVWLVAVIVGSPMWHVQQLEIKYDFLYEKEHICCLEEWTSPVHQKIYTTFILVILFLLPLMVMLILYSKIGYELWIKKRVGDGSVLRTIHGKEMSKIARKKKRAVIMMVTVVALFAVCWAPFHVVHMMIEYSNFEKEYDDVTIKMIFAIVQIIGFSNSICNPIVYAFMNENFKKNVLSAVCYCIVNKTFSPAQRHGNSGITMMRKKAKFSLRENPVEETKGEAFSDGNIEVKLCEQTEEKKKLKRHLALFRSELAENSPLDSGH.

Residues 1–46 (MQALNITPEQFSRLLRDHNLTREQFIALYRLRPLVYTPELPGRAKL) lie on the Extracellular side of the membrane. Residue N19 is glycosylated (N-linked (GlcNAc...) asparagine). A helical membrane pass occupies residues 47 to 67 (ALVLTGVLIFALALFGNALVF). At 68–81 (YVVTRSKAMRTVTN) the chain is on the cytoplasmic side. Residues 82 to 102 (IFICSLALSDLLITFFCIPVT) traverse the membrane as a helical segment. Topologically, residues 103–120 (MLQNISDNWLGGAFICKM) are extracellular. A helical transmembrane segment spans residues 121–141 (VPFVQSTAVVTEILTMTCIAV). Topologically, residues 142–162 (ERHQGLVHPFKMKWQYTNRRA) are cytoplasmic. A helical transmembrane segment spans residues 163-183 (FTMLGVVWLVAVIVGSPMWHV). The Extracellular portion of the chain corresponds to 184-212 (QQLEIKYDFLYEKEHICCLEEWTSPVHQK). Residues 213-233 (IYTTFILVILFLLPLMVMLIL) traverse the membrane as a helical segment. The Cytoplasmic portion of the chain corresponds to 234–271 (YSKIGYELWIKKRVGDGSVLRTIHGKEMSKIARKKKRA). A helical transmembrane segment spans residues 272 to 292 (VIMMVTVVALFAVCWAPFHVV). Over 293–311 (HMMIEYSNFEKEYDDVTIK) the chain is Extracellular. Residues 312 to 332 (MIFAIVQIIGFSNSICNPIVY) traverse the membrane as a helical segment. The Cytoplasmic portion of the chain corresponds to 333-431 (AFMNENFKKN…AENSPLDSGH (99 aa)).

It belongs to the G-protein coupled receptor 1 family. In terms of tissue distribution, expressed widely in the brain with high levels in the hypothalamus, trigeminal ganglia and vestibular neurons, and moderate levels in the amygdala, cortex, pituitary, hippocampus, thalamus, caudate nucleus and medulla oblongata. In peripheral tissues, expressed at high levels in the retina and at moderate levels in the heart, kidney, testis and thyroid.

Its subcellular location is the cell membrane. Receptor for the orexigenic neuropeptide QRFP. The activity of this receptor is mediated by G proteins that modulate adenylate cyclase activity and intracellular calcium levels. The chain is Pyroglutamylated RF-amide peptide receptor (QRFPR) from Homo sapiens (Human).